The chain runs to 369 residues: Protein VP6 (369 aa).

The segment at 20–208 is disordered; the sequence is LEQRSIAPLL…EEAKVGGGDR (189 aa). A compositionally biased stretch (basic and acidic residues) spans 29–66; sequence LREKNSTEAKSKLKEDGEKKNKSEKEENKIHDDRRVES. 2 stretches are compositionally biased toward gly residues: residues 92–111 and 162–171; these read TGGGDGGAGARTGIGGGGVG and TSGGLQGRGG. The span at 196 to 208 shows a compositional bias: basic and acidic residues; the sequence is TEGEEAKVGGGDR.

The protein belongs to the orbivirus VP6 family.

Its subcellular location is the virion. The sequence is that of Protein VP6 (S9) from African horse sickness virus 3 (AHSV-3).